Here is a 248-residue protein sequence, read N- to C-terminus: Triosephosphate isomerase (248 aa).

Substrate-binding residues include Asn-11 and Lys-13. The Electrophile role is filled by His-95. Glu-165 serves as the catalytic Proton acceptor.

Belongs to the triosephosphate isomerase family. Homodimer.

It localises to the cytoplasm. It carries out the reaction dihydroxyacetone phosphate = methylglyoxal + phosphate. The catalysed reaction is D-glyceraldehyde 3-phosphate = dihydroxyacetone phosphate. It functions in the pathway carbohydrate degradation; glycolysis; D-glyceraldehyde 3-phosphate from glycerone phosphate: step 1/1. It participates in carbohydrate biosynthesis; gluconeogenesis. Its function is as follows. Triosephosphate isomerase is an extremely efficient metabolic enzyme that catalyzes the interconversion between dihydroxyacetone phosphate (DHAP) and D-glyceraldehyde-3-phosphate (G3P) in glycolysis and gluconeogenesis. It is also responsible for the non-negligible production of methylglyoxal a reactive cytotoxic side-product that modifies and can alter proteins, DNA and lipids. This Xenopus tropicalis (Western clawed frog) protein is Triosephosphate isomerase (tpi1).